Here is a 267-residue protein sequence, read N- to C-terminus: Corrinoid adenosyltransferase EutT (267 aa).

Residues cysteine 80 and cysteine 83 each contribute to the a divalent metal cation site.

Belongs to the Cob(I)alamin adenosyltransferase family. EutT subfamily. In terms of assembly, homodimer. The cofactor is a divalent metal cation.

It localises to the bacterial microcompartment. The enzyme catalyses 2 cob(II)alamin + reduced [electron-transfer flavoprotein] + 2 ATP + 2 H2O = 2 adenosylcob(III)alamin + oxidized [electron-transfer flavoprotein] + 2 phosphate + 2 diphosphate + 3 H(+). It carries out the reaction 2 cob(II)inamide + reduced [electron-transfer flavoprotein] + 2 ATP + 2 H2O = 2 adenosylcob(III)inamide + oxidized [electron-transfer flavoprotein] + 2 phosphate + 2 diphosphate + 3 H(+). It participates in amine and polyamine degradation; ethanolamine degradation. In terms of biological role, converts cyanocobalamin (CN-B12) to adenosylcobalamin (AdoCbl), the inducer of the eut operon. Is not active on cobinamide nor other intermediates in the adenosylcobalamin synthetic pathway. Allows full induction of the eut operon. Can use ADP, CTP and dATP in place of ATP, and cobinamide in place of cobalamin, none are as efficiently used as ATP and cobalamin. Its function is as follows. Expression of the eut operon allows this bacteria to use ethanolamine (EA) as a carbon, nitrogen and energy source. It relies on cobalamin (vitamin B12) both as a cofactor for the ethanolamine ammonia-lyase (EAL) activity and to induce the operon. EA enhances bacterial survival in macrophages in a concentration-dependent manner, suggesting it is an important nutrient during infection. This is Corrinoid adenosyltransferase EutT from Salmonella typhimurium (strain LT2 / SGSC1412 / ATCC 700720).